A 451-amino-acid chain; its full sequence is Tubulin alpha-1A chain (451 aa).

Residues G10, Q11, A12, and Q15 each coordinate GTP. At K40 the chain carries N6-acetyllysine. The GTP site is built by E71, A99, S140, G143, G144, T145, G146, T179, E183, N206, Y224, N228, and L252. A Mg(2+)-binding site is contributed by E71. Residue E254 is part of the active site. Residue Y282 is modified to 3'-nitrotyrosine. The residue at position 439 (S439) is a Phosphoserine. A 5-glutamyl polyglutamate mark is found at E443 and E445. Y451 is modified (3'-nitrotyrosine).

The protein belongs to the tubulin family. Heterodimer of alpha- and beta-tubulin. A typical microtubule is a hollow water-filled tube with an outer diameter of 25 nm and an inner diameter of 15 nM. Alpha-beta heterodimers associate head-to-tail to form protofilaments running lengthwise along the microtubule wall with the beta-tubulin subunit facing the microtubule plus end conferring a structural polarity. Microtubules usually have 13 protofilaments but different protofilament numbers can be found in some organisms and specialized cells. Interacts with gamma-tubulin; the interaction allows microtubules to nucleate from the gamma-tubulin ring complex (gTuRC). Nascent microtubule interacts (via alpha-tubulin MREC motif) with TTC5/STRAP; this interaction may result in tubulin mRNA-targeted degradation. Component of sperm flagellar doublet microtubules. It depends on Mg(2+) as a cofactor. Post-translationally, some glutamate residues at the C-terminus are polyglycylated, resulting in polyglycine chains on the gamma-carboxyl group. Glycylation is mainly limited to tubulin incorporated into axonemes (cilia and flagella) whereas glutamylation is prevalent in neuronal cells, centrioles, axonemes, and the mitotic spindle. Both modifications can coexist on the same protein on adjacent residues, and lowering polyglycylation levels increases polyglutamylation, and reciprocally. Cilia and flagella glycylation is required for their stability and maintenance. Flagella glycylation controls sperm motility. Some glutamate residues at the C-terminus are polyglutamylated, resulting in polyglutamate chains on the gamma-carboxyl group. Polyglutamylation plays a key role in microtubule severing by spastin (SPAST). SPAST preferentially recognizes and acts on microtubules decorated with short polyglutamate tails: severing activity by SPAST increases as the number of glutamates per tubulin rises from one to eight, but decreases beyond this glutamylation threshold. Glutamylation is also involved in cilia motility. In terms of processing, acetylation of alpha chains at Lys-40 is located inside the microtubule lumen. This modification has been correlated with increased microtubule stability, intracellular transport and ciliary assembly. Post-translationally, methylation of alpha chains at Lys-40 is found in mitotic microtubules and is required for normal mitosis and cytokinesis contributing to genomic stability. Nitration of Tyr-451 is irreversible and interferes with normal dynein intracellular distribution. In terms of processing, undergoes a tyrosination/detyrosination cycle, the cyclic removal and re-addition of a C-terminal tyrosine residue by the enzymes tubulin tyrosine carboxypeptidase (MATCAP1, VASH1 or VASH2) and tubulin tyrosine ligase (TTL), respectively. Post-translationally, tyrosination promotes microtubule interaction with CAP-Gly domain-containing proteins such as CLIP1, CLIP2 and DCTN1. Tyrosination regulates the initiation of dynein-dynactin motility via interaction with DCTN1, which brings the dynein-dynactin complex into contact with microtubules. In neurons, tyrosinated tubulins mediate the initiation of retrograde vesicle transport. Detyrosination is involved in metaphase plate congression by guiding chromosomes during mitosis: detyrosination promotes interaction with CENPE, promoting pole-proximal transport of chromosomes toward the equator. Detyrosination increases microtubules-dependent mechanotransduction in dystrophic cardiac and skeletal muscle. In cardiomyocytes, detyrosinated microtubules are required to resist to contractile compression during contraction: detyrosination promotes association with desmin (DES) at force-generating sarcomeres, leading to buckled microtubules and mechanical resistance to contraction.

It localises to the cytoplasm. Its subcellular location is the cytoskeleton. It is found in the flagellum axoneme. It catalyses the reaction GTP + H2O = GDP + phosphate + H(+). Its function is as follows. Tubulin is the major constituent of microtubules, protein filaments consisting of alpha- and beta-tubulin heterodimers. Microtubules grow by the addition of GTP-tubulin dimers to the microtubule end, where a stabilizing cap forms. Below the cap, tubulin dimers are in GDP-bound state, owing to GTPase activity of alpha-tubulin. This Sus scrofa (Pig) protein is Tubulin alpha-1A chain (TUBA1A).